We begin with the raw amino-acid sequence, 151 residues long: Large ribosomal subunit protein bL9 (151 aa).

Belongs to the bacterial ribosomal protein bL9 family.

Its function is as follows. Binds to the 23S rRNA. In Francisella tularensis subsp. tularensis (strain FSC 198), this protein is Large ribosomal subunit protein bL9.